We begin with the raw amino-acid sequence, 400 residues long: Cytochrome P450 BJ-1 homolog (400 aa).

Position 349 (Cys-349) interacts with heme.

This sequence belongs to the cytochrome P450 family. Heme serves as cofactor.

Cytochromes P450 are a group of heme-thiolate monooxygenases. They oxidize a variety of structurally unrelated compounds, including steroids, fatty acids, and xenobiotics. This is Cytochrome P450 BJ-1 homolog (cyp112A2) from Sinorhizobium fredii (strain NBRC 101917 / NGR234).